A 488-amino-acid polypeptide reads, in one-letter code: Glutamyl-tRNA(Gln) amidotransferase subunit A (488 aa).

Catalysis depends on charge relay system residues K77 and S152. Catalysis depends on S176, which acts as the Acyl-ester intermediate.

Belongs to the amidase family. GatA subfamily. In terms of assembly, heterotrimer of A, B and C subunits.

It catalyses the reaction L-glutamyl-tRNA(Gln) + L-glutamine + ATP + H2O = L-glutaminyl-tRNA(Gln) + L-glutamate + ADP + phosphate + H(+). Functionally, allows the formation of correctly charged Gln-tRNA(Gln) through the transamidation of misacylated Glu-tRNA(Gln) in organisms which lack glutaminyl-tRNA synthetase. The reaction takes place in the presence of glutamine and ATP through an activated gamma-phospho-Glu-tRNA(Gln). This chain is Glutamyl-tRNA(Gln) amidotransferase subunit A, found in Streptococcus pyogenes serotype M6 (strain ATCC BAA-946 / MGAS10394).